A 2219-amino-acid polypeptide reads, in one-letter code: RNA-directed RNA polymerase L (2219 aa).

Residues 26–289 (KLAFLVQTEP…TTEDDVEYLI (264 aa)) form an endonuclease region. Mn(2+) is bound by residues glutamate 51, aspartate 89, and glutamate 102. Lysine 115 is an active-site residue. The RdRp catalytic domain maps to 1177 to 1373 (LSMKLNVSLA…YMSDQLNKFV (197 aa)). Position 1335 (aspartate 1335) interacts with Mg(2+).

The protein belongs to the Bunyavirales RNA polymerase family. As to quaternary structure, homomultimer; the oligomeric structure is essential for the polymerase activity. Interacts with nucleoprotein N. Interacts with protein Z; this interaction inhibits viral transcription and replication, Z partially blocks the product exit tunnel for the releasing nascent RNA product. Mn(2+) is required as a cofactor. The cofactor is Mg(2+).

Its subcellular location is the virion. The protein resides in the host cytoplasm. It catalyses the reaction RNA(n) + a ribonucleoside 5'-triphosphate = RNA(n+1) + diphosphate. In terms of biological role, RNA-dependent RNA polymerase, which is responsible for the replication and transcription of the viral RNA genome using antigenomic RNA as an intermediate. During transcription, synthesizes subgenomic RNAs and assures their capping by a cap-snatching mechanism, which involves the endonuclease activity cleaving the host capped pre-mRNAs. These short capped RNAs are then used as primers for viral transcription. The 3'-end of subgenomic mRNAs molecules are heterogeneous and not polyadenylated. The replicase function is to direct synthesis of antigenomic and genomic RNA which are encapsidated and non capped. As a consequence of the use of the same enzyme for both transcription and replication, these mechanisms need to be well coordinated. These processes may be regulated by proteins N and Z in a dose-dependent manner. Z protein inhibits the viral polymerase L und thus the viral transcription and RNA synthesis. This Homo sapiens (Human) protein is RNA-directed RNA polymerase L.